A 471-amino-acid polypeptide reads, in one-letter code: ATP synthase subunit beta (471 aa).

ATP is bound at residue 153 to 160 (GGAGVGKT).

This sequence belongs to the ATPase alpha/beta chains family. In terms of assembly, F-type ATPases have 2 components, CF(1) - the catalytic core - and CF(0) - the membrane proton channel. CF(1) has five subunits: alpha(3), beta(3), gamma(1), delta(1), epsilon(1). CF(0) has four main subunits: a(1), b(1), b'(1) and c(9-12).

The protein resides in the cell membrane. The enzyme catalyses ATP + H2O + 4 H(+)(in) = ADP + phosphate + 5 H(+)(out). Produces ATP from ADP in the presence of a proton gradient across the membrane. The catalytic sites are hosted primarily by the beta subunits. The protein is ATP synthase subunit beta of Chloroflexus aggregans (strain MD-66 / DSM 9485).